The following is a 264-amino-acid chain: S-adenosylmethionine decarboxylase proenzyme (264 aa).

The active-site Schiff-base intermediate with substrate; via pyruvic acid is S113. S113 carries the pyruvic acid (Ser); by autocatalysis modification. Catalysis depends on H118, which acts as the Proton acceptor; for processing activity. C141 serves as the catalytic Proton donor; for catalytic activity.

The protein belongs to the prokaryotic AdoMetDC family. Type 2 subfamily. As to quaternary structure, heterooctamer of four alpha and four beta chains arranged as a tetramer of alpha/beta heterodimers. Requires pyruvate as cofactor. Post-translationally, is synthesized initially as an inactive proenzyme. Formation of the active enzyme involves a self-maturation process in which the active site pyruvoyl group is generated from an internal serine residue via an autocatalytic post-translational modification. Two non-identical subunits are generated from the proenzyme in this reaction, and the pyruvate is formed at the N-terminus of the alpha chain, which is derived from the carboxyl end of the proenzyme. The post-translation cleavage follows an unusual pathway, termed non-hydrolytic serinolysis, in which the side chain hydroxyl group of the serine supplies its oxygen atom to form the C-terminus of the beta chain, while the remainder of the serine residue undergoes an oxidative deamination to produce ammonia and the pyruvoyl group blocking the N-terminus of the alpha chain.

The enzyme catalyses S-adenosyl-L-methionine + H(+) = S-adenosyl 3-(methylsulfanyl)propylamine + CO2. It participates in amine and polyamine biosynthesis; S-adenosylmethioninamine biosynthesis; S-adenosylmethioninamine from S-adenosyl-L-methionine: step 1/1. Functionally, catalyzes the decarboxylation of S-adenosylmethionine to S-adenosylmethioninamine (dcAdoMet), the propylamine donor required for the synthesis of the polyamines spermine and spermidine from the diamine putrescine. This is S-adenosylmethionine decarboxylase proenzyme from Xanthomonas oryzae pv. oryzae (strain MAFF 311018).